A 226-amino-acid polypeptide reads, in one-letter code: Deoxyribose-phosphate aldolase (226 aa).

Asp-93 acts as the Proton donor/acceptor in catalysis. Lys-159 (schiff-base intermediate with acetaldehyde) is an active-site residue. Lys-189 acts as the Proton donor/acceptor in catalysis.

The protein belongs to the DeoC/FbaB aldolase family. DeoC type 1 subfamily.

The protein resides in the cytoplasm. It catalyses the reaction 2-deoxy-D-ribose 5-phosphate = D-glyceraldehyde 3-phosphate + acetaldehyde. It participates in carbohydrate degradation; 2-deoxy-D-ribose 1-phosphate degradation; D-glyceraldehyde 3-phosphate and acetaldehyde from 2-deoxy-alpha-D-ribose 1-phosphate: step 2/2. Functionally, catalyzes a reversible aldol reaction between acetaldehyde and D-glyceraldehyde 3-phosphate to generate 2-deoxy-D-ribose 5-phosphate. This chain is Deoxyribose-phosphate aldolase, found in Mycobacterium marinum (strain ATCC BAA-535 / M).